We begin with the raw amino-acid sequence, 451 residues long: Serine/threonine-protein phosphatase 2A 55 kDa regulatory subunit B delta isoform (451 aa).

WD repeat units lie at residues 30–69 (AEAD…KSRP), 95–136 (EIEE…KRAE), 179–217 (AHTY…RSFN), 228–268 (ELTE…LCDR), 287–325 (EIIS…RPVE), 342–383 (ENDC…DITL), and 418–451 (DFNK…DKIN).

It belongs to the phosphatase 2A regulatory subunit B family. As to quaternary structure, PP2A consists of a common heterodimeric core enzyme, composed of a 36 kDa catalytic subunit (subunit C) and a 65 kDa constant regulatory subunit (PR65 or subunit A), that associates with a variety of regulatory subunits.

It localises to the cytoplasm. In terms of biological role, substrate-recognition subunit of protein phosphatase 2A (PP2A) that plays a key role in cell cycle by controlling mitosis entry and exit. The activity of PP2A complexes containing PPP2R2D (PR55-delta) fluctuate during the cell cycle: the activity is high in interphase and low in mitosis. The polypeptide is Serine/threonine-protein phosphatase 2A 55 kDa regulatory subunit B delta isoform (PPP2R2D) (Gallus gallus (Chicken)).